The sequence spans 493 residues: GTPase Der (493 aa).

The EngA-type G 1 domain maps to 3-166; it reads PVIALVGRPN…EALGIFPKDN (164 aa). GTP contacts are provided by residues 9–16, 56–60, and 118–121; these read GRPNVGKS, DTGGI, and NKVD. Residues 166–195 form a disordered region; that stretch reads NAEEEGEGEPASEEVAEGEEPTRIPGPSEK. A compositionally biased stretch (acidic residues) spans 167 to 184; that stretch reads AEEEGEGEPASEEVAEGE. In terms of domain architecture, EngA-type G 2 spans 198-371; sequence IKIAIIGRPN…SVQESFRSAV (174 aa). Residues 204 to 211, 251 to 255, and 316 to 319 each bind GTP; these read GRPNVGKS, DTAGV, and NKWD. Positions 372 to 456 constitute a KH-like domain; the sequence is TRWPTSRLTS…PIRIEYKGGE (85 aa). The segment covering 454–463 has biased composition (basic and acidic residues); it reads GGENPYEGKK. The tract at residues 454–493 is disordered; it reads GGENPYEGKKNSLTARQVNKKRRLMSHHKKAEKKKKDKRR. Basic residues predominate over residues 471–493; that stretch reads VNKKRRLMSHHKKAEKKKKDKRR.

Belongs to the TRAFAC class TrmE-Era-EngA-EngB-Septin-like GTPase superfamily. EngA (Der) GTPase family. In terms of assembly, associates with the 50S ribosomal subunit.

Functionally, GTPase that plays an essential role in the late steps of ribosome biogenesis. This is GTPase Der from Pseudomonas aeruginosa (strain UCBPP-PA14).